The sequence spans 471 residues: Putative multidrug resistance protein MdtD (471 aa).

Over 1-11 the chain is Periplasmic; the sequence is MTDLPDSTRWQ. A helical transmembrane segment spans residues 12 to 32; sequence LWIVAFGFFMQSLDTTIVNTA. The Cytoplasmic portion of the chain corresponds to 33–48; it reads LPSMAQSLGESPLHMH. Residues 49–69 traverse the membrane as a helical segment; it reads MVIVSYVLTVAVMLPASGWLA. Residues 70-76 lie on the Periplasmic side of the membrane; it reads DKVGVRN. A helical membrane pass occupies residues 77 to 97; it reads IFFTAIVLFTLGSLFCALSGT. Over 98 to 101 the chain is Cytoplasmic; it reads LNEL. Residues 102–124 form a helical membrane-spanning segment; the sequence is LLARALQGVGGAMMVPVGRLTVM. Topologically, residues 125 to 137 are periplasmic; sequence KIVPREQYMAAMT. A helical transmembrane segment spans residues 138–158; that stretch reads FVTLPGQVGPLLGPALGGLLV. At 159–164 the chain is on the cytoplasmic side; sequence EYASWH. A helical membrane pass occupies residues 165–185; the sequence is WIFLINIPVGIIGAIATLMLM. Topologically, residues 186–196 are periplasmic; the sequence is PNYTMQTRRFD. A helical transmembrane segment spans residues 197-217; it reads LSGFLLLAVGMAVLTLALDGS. The Cytoplasmic segment spans residues 218 to 224; sequence KGTGLSP. A helical membrane pass occupies residues 225–245; the sequence is LAIAGLVAVGVVALVLYLLHA. Residues 246–262 are Periplasmic-facing; it reads RNNNRALFSLKLFRTRT. A helical membrane pass occupies residues 263–283; that stretch reads FSLGLAGSFAGRIGSGMLPFM. At 284 to 285 the chain is on the cytoplasmic side; it reads TP. A helical membrane pass occupies residues 286-306; the sequence is VFLQIGLGFSPFHAGLMMIPM. Topologically, residues 307–341 are periplasmic; that stretch reads VLGSMGMKRIVVQVVNRFGYRRVLVATTLGLSLVT. The chain crosses the membrane as a helical span at residues 342-362; it reads LLFMTTALLGWYYVLPFVLFL. The Cytoplasmic segment spans residues 363–395; the sequence is QGMVNSTRFSSMNTLTLKDLPDNLASSGNSLLS. Residues 396–416 form a helical membrane-spanning segment; that stretch reads MIMQLSMSIGVTIAGLLLGLF. Over 417 to 430 the chain is Periplasmic; that stretch reads GSQHISVDSGTTQT. The helical transmembrane segment at 431-451 threads the bilayer; that stretch reads VFMYTWLSMAFIIALPAFIFA. The Cytoplasmic segment spans residues 452 to 471; that stretch reads RVPNDTHQNVAISRRKRSAQ.

Belongs to the major facilitator superfamily. TCR/Tet family.

The protein resides in the cell inner membrane. This Shigella flexneri protein is Putative multidrug resistance protein MdtD.